The following is a 374-amino-acid chain: Putative clathrin assembly protein At1g33340 (374 aa).

Positions 30–163 (YNEKAFFDIE…GWIINQAGKL (134 aa)) constitute an ENTH domain.

The protein localises to the membrane. The protein resides in the clathrin-coated pit. It is found in the golgi apparatus. It localises to the cytoplasmic vesicle. Its subcellular location is the clathrin-coated vesicle. The polypeptide is Putative clathrin assembly protein At1g33340 (Arabidopsis thaliana (Mouse-ear cress)).